Consider the following 66-residue polypeptide: Type 3 secretion system chaperone YscE (66 aa).

It belongs to the YscE family. Component of the heterodimeric YscE-YscG chaperone. The YscE-YscG chaperone forms a stable ternary complex with YscF/SctF.

The protein localises to the cytoplasm. Chaperone of the type III secretion system (T3SS), also called injectisome, which is used to inject bacterial effector proteins into eukaryotic host cells. Along with YscG, prevents premature polymerization of the YscF/SctF needle protein within the cytoplasm. Required for Yop secretion. This chain is Type 3 secretion system chaperone YscE, found in Yersinia enterocolitica.